Consider the following 35-residue polypeptide: Cytochrome b6-f complex subunit 7 (35 aa).

Residues alanine 9–leucine 27 traverse the membrane as a helical segment.

This sequence belongs to the PetM family. The 4 large subunits of the cytochrome b6-f complex are cytochrome b6, subunit IV (17 kDa polypeptide, PetD), cytochrome f and the Rieske protein, while the 4 small subunits are PetG, PetL, PetM and PetN. The complex functions as a dimer.

The protein resides in the cellular thylakoid membrane. In terms of biological role, component of the cytochrome b6-f complex, which mediates electron transfer between photosystem II (PSII) and photosystem I (PSI), cyclic electron flow around PSI, and state transitions. The chain is Cytochrome b6-f complex subunit 7 from Synechococcus sp. (strain JA-3-3Ab) (Cyanobacteria bacterium Yellowstone A-Prime).